Reading from the N-terminus, the 522-residue chain is Zinc finger and BTB domain-containing protein 18 (522 aa).

One can recognise a BTB domain in the interval 24–91; sequence CDCTVLVGDA…MYEGKLQFKD (68 aa). Basic and acidic residues predominate over residues 121–143; sequence ATTEADSTKKEEDASSCSDKVES. Residues 121–166 are disordered; it reads ATTEADSTKKEEDASSCSDKVESLSDGSSHMAGDLPSDEDEGEDDK. S157 carries the phosphoserine modification. K273 is covalently cross-linked (Glycyl lysine isopeptide (Lys-Gly) (interchain with G-Cter in SUMO2)). An interaction with DNMT3A region spans residues 310–427; that stretch reads EPAHLAPLRE…TFSCMYTLKR (118 aa). C2H2-type zinc fingers lie at residues 370–392, 410–432, 438–460, and 466–489; these read FMCPLCNKVFPSPHILQIHLSTH, PTCSLCGKTFSCMYTLKRHERTH, YTCTQCGKSFQYSHNLSRHAVVH, and HACKWCERRFTQSGDLYRHIRKFH. S516 and S517 each carry phosphoserine.

Belongs to the krueppel C2H2-type zinc-finger protein family. ZBTB18 subfamily. As to quaternary structure, interacts with DNMT3A.

It localises to the nucleus. Transcriptional repressor that plays a role in various developmental processes such as myogenesis and brain development. Specifically binds the consensus DNA sequence 5'-[AC]ACATCTG[GT][AC]-3' which contains the E box core, and acts by recruiting chromatin remodeling multiprotein complexes. Plays a key role in myogenesis by directly repressing the expression of ID2 and ID3, 2 inhibitors of skeletal myogenesis. Also involved in controlling cell division of progenitor cells and regulating the survival of postmitotic cortical neurons. May also play a role in the organization of chromosomes in the nucleus. This chain is Zinc finger and BTB domain-containing protein 18 (Zbtb18), found in Rattus norvegicus (Rat).